Here is a 470-residue protein sequence, read N- to C-terminus: Cysteine--tRNA ligase (470 aa).

Cys31 is a binding site for Zn(2+). Positions Pro33–His43 match the 'HIGH' region motif. Cys209, His234, and Glu238 together coordinate Zn(2+). Positions Lys266–Ser270 match the 'KMSKS' region motif. An ATP-binding site is contributed by Lys269.

Belongs to the class-I aminoacyl-tRNA synthetase family. The cofactor is Zn(2+).

The protein localises to the cytoplasm. It catalyses the reaction tRNA(Cys) + L-cysteine + ATP = L-cysteinyl-tRNA(Cys) + AMP + diphosphate. This chain is Cysteine--tRNA ligase, found in Saccharolobus solfataricus (strain ATCC 35092 / DSM 1617 / JCM 11322 / P2) (Sulfolobus solfataricus).